A 189-amino-acid chain; its full sequence is Threonylcarbamoyl-AMP synthase (189 aa).

The YrdC-like domain occupies 7-189; the sequence is NPRVNYAANM…LLTGQVVRPS (183 aa).

Belongs to the SUA5 family. TsaC subfamily.

It is found in the cytoplasm. The catalysed reaction is L-threonine + hydrogencarbonate + ATP = L-threonylcarbamoyladenylate + diphosphate + H2O. Functionally, required for the formation of a threonylcarbamoyl group on adenosine at position 37 (t(6)A37) in tRNAs that read codons beginning with adenine. Catalyzes the conversion of L-threonine, HCO(3)(-)/CO(2) and ATP to give threonylcarbamoyl-AMP (TC-AMP) as the acyladenylate intermediate, with the release of diphosphate. In Cellvibrio japonicus (strain Ueda107) (Pseudomonas fluorescens subsp. cellulosa), this protein is Threonylcarbamoyl-AMP synthase.